Consider the following 151-residue polypeptide: Neuroglobin (151 aa).

One can recognise a Globin domain in the interval 1–149 (MERPEPELIR…VVQAMSRGWD (149 aa)). Heme b contacts are provided by histidine 64 and histidine 96.

Belongs to the globin family. As to quaternary structure, monomer. Homodimer and homotetramer; disulfide-linked. Mainly monomeric but also detected as part of homodimers and homotetramers. Interacts with 14-3-3 proteins; regulates the phosphorylation of NGB. Could interact (ferrous form) with G-alpha(i) proteins (GTP-bound form). Phosphorylated during hypoxia by ERK1/ERK2. Phosphorylation regulates the heme pocket hexacoordination preventing the association of His-64 with the heme metal center. Thereby, promotes the access of dioxygen and nitrite to the heme and stimulates the nitrite reductase activity. Phosphorylation during hypoxia is stabilized by 14-3-3 proteins.

It is found in the cytoplasm. Its subcellular location is the cytosol. It localises to the mitochondrion matrix. It catalyses the reaction Fe(III)-heme b-[protein] + nitric oxide + H2O = Fe(II)-heme b-[protein] + nitrite + 2 H(+). In terms of biological role, monomeric globin with a bis-histidyl six-coordinate heme-iron atom through which it can bind dioxygen, carbon monoxide and nitric oxide. Could help transport oxygen and increase its availability to the metabolically active neuronal tissues, though its low quantity in tissues as well as its high affinity for dioxygen, which may limit its oxygen-releasing ability, argue against it. The ferrous/deoxygenated form exhibits a nitrite reductase activity and it could produce nitric oxide which in turn inhibits cellular respiration in response to hypoxia. In its ferrous/deoxygenated state, it may also exhibit GDI (Guanine nucleotide Dissociation Inhibitor) activity toward heterotrimeric G-alpha proteins, thereby regulating signal transduction to facilitate neuroprotective responses in the wake of hypoxia and associated oxidative stress. This chain is Neuroglobin, found in Canis lupus familiaris (Dog).